The sequence spans 174 residues: B3 domain-containing protein At3g06220 (174 aa).

The TF-B3 DNA-binding region spans 8–101; that stretch reads PRFYTVFLSC…SYEVSIYGRG (94 aa). The tract at residues 114–174 is disordered; the sequence is EISDESESDN…ISDASDSDYY (61 aa). 2 stretches are compositionally biased toward acidic residues: residues 139 to 150 and 164 to 174; these read ENSDDTEGDNDS and EISDASDSDYY.

It localises to the nucleus. The sequence is that of B3 domain-containing protein At3g06220 from Arabidopsis thaliana (Mouse-ear cress).